Reading from the N-terminus, the 101-residue chain is Small ribosomal subunit protein uS14 (101 aa).

This sequence belongs to the universal ribosomal protein uS14 family. In terms of assembly, part of the 30S ribosomal subunit. Contacts proteins S3 and S10.

Binds 16S rRNA, required for the assembly of 30S particles and may also be responsible for determining the conformation of the 16S rRNA at the A site. The polypeptide is Small ribosomal subunit protein uS14 (Francisella tularensis subsp. tularensis (strain FSC 198)).